The following is a 603-amino-acid chain: Elongation factor 4 (603 aa).

Positions 7-189 (KKIRNFCIIA…SVVKNVPPPE (183 aa)) constitute a tr-type G domain. Residues 19–24 (DHGKST) and 136–139 (NKID) contribute to the GTP site.

This sequence belongs to the TRAFAC class translation factor GTPase superfamily. Classic translation factor GTPase family. LepA subfamily.

The protein resides in the cell membrane. It catalyses the reaction GTP + H2O = GDP + phosphate + H(+). Its function is as follows. Required for accurate and efficient protein synthesis under certain stress conditions. May act as a fidelity factor of the translation reaction, by catalyzing a one-codon backward translocation of tRNAs on improperly translocated ribosomes. Back-translocation proceeds from a post-translocation (POST) complex to a pre-translocation (PRE) complex, thus giving elongation factor G a second chance to translocate the tRNAs correctly. Binds to ribosomes in a GTP-dependent manner. The chain is Elongation factor 4 from Acetivibrio thermocellus (strain ATCC 27405 / DSM 1237 / JCM 9322 / NBRC 103400 / NCIMB 10682 / NRRL B-4536 / VPI 7372) (Clostridium thermocellum).